The primary structure comprises 1035 residues: Integrin alpha-9 (1035 aa).

The N-terminal stretch at 1 to 29 is a signal peptide; the sequence is MGGPAAPRGAGRLRALLLALVVAGIPAGA. The Extracellular portion of the chain corresponds to 30 to 981; it reads YNLDPQRPVH…LEPRGYVVGW (952 aa). FG-GAP repeat units follow at residues 35-96, 111-174, 182-232, 233-289, 290-349, 351-408, and 411-474; these read QRPV…PDRR, SCGK…AKGR, EYKK…NTYL, KLND…SGTL, IKIF…GALE, QLAL…GIVP, and SMKL…LPGS. Cystine bridges form between cysteine 87/cysteine 97, cysteine 142/cysteine 162, and cysteine 179/cysteine 194. The N-linked (GlcNAc...) asparagine glycan is linked to asparagine 225. Ca(2+)-binding residues include aspartate 312, asparagine 314, aspartate 316, aspartate 320, aspartate 373, aspartate 375, aspartate 377, aspartate 381, aspartate 435, aspartate 437, asparagine 439, and aspartate 443. N-linked (GlcNAc...) asparagine glycosylation occurs at asparagine 476. A disulfide bridge connects residues cysteine 482 and cysteine 491. Asparagine 493 carries an N-linked (GlcNAc...) asparagine glycan. The cysteines at positions 497 and 555 are disulfide-linked. Residue asparagine 612 is glycosylated (N-linked (GlcNAc...) asparagine). Cysteine 620 and cysteine 625 form a disulfide bridge. N-linked (GlcNAc...) asparagine glycans are attached at residues asparagine 654, asparagine 658, asparagine 672, and asparagine 676. A disulfide bridge connects residues cysteine 696 and cysteine 706. N-linked (GlcNAc...) asparagine glycans are attached at residues asparagine 807 and asparagine 854. 2 cysteine pairs are disulfide-bonded: cysteine 855-cysteine 891 and cysteine 898-cysteine 903. Residue asparagine 904 is glycosylated (N-linked (GlcNAc...) asparagine). Residues 982–1002 form a helical membrane-spanning segment; sequence IIAISLLVGILIFLLLAVLLW. The Cytoplasmic segment spans residues 1003–1035; that stretch reads KMGFFRRRYKEIIEAEKNRKENEDSWDWVQKNQ. The short motif at 1005–1009 is the GFFKR motif element; sequence GFFRR.

The protein belongs to the integrin alpha chain family. Heterodimer of an alpha and a beta subunit. Alpha-9 (ITGA9) associates with beta-1 (ITGB1). Integrin ITGA9:ITGB1 interacts with FBLN5 (via N-terminus). Integrin ITGA9:ITGB1 interacts with SPP1/OPN (via N-terminus). Integrin ITGA9:ITGB1 interacts with TNC/TNFN3 (via the 3rd Fibronectin type-III domain). Integrin ITGA9:ITGB1 interacts with SVEP1/polydom (via Sushi domain 21); thereby inhibits Ca(2+) intracellular signaling and as a result represses vasocontraction. As to expression, expressed in vascular smooth muscle cells (at protein level). Expressed in the airway epithelium (at protein level).

It is found in the membrane. Functionally, integrin alpha-9/beta-1 (ITGA9:ITGB1) is a receptor for VCAM1, cytotactin and osteopontin. It recognizes the sequence A-E-I-D-G-I-E-L in cytotactin. ITGA9:ITGB1 may play a crucial role in SVEP1/polydom-mediated myoblast cell adhesion. Integrin ITGA9:ITGB1 represses PRKCA-mediated L-type voltage-gated channel Ca(2+) influx and ROCK-mediated calcium sensitivity in vascular smooth muscle cells via its interaction with SVEP1, thereby inhibiting vasocontraction. The chain is Integrin alpha-9 (ITGA9) from Homo sapiens (Human).